The sequence spans 261 residues: Protein unc-50 homolog (261 aa).

6 helical membrane-spanning segments follow: residues 37–57, 82–102, 113–133, 166–186, 190–210, and 225–245; these read IFHY…YLCF, AFAV…AITF, VMFW…ATIG, SFFP…PILL, LFAA…YYYV, and VVFL…VVMG.

It belongs to the unc-50 family.

The protein resides in the membrane. This is Protein unc-50 homolog from Dictyostelium discoideum (Social amoeba).